Here is a 99-residue protein sequence, read N- to C-terminus: Large ribosomal subunit protein bL21 (99 aa).

It belongs to the bacterial ribosomal protein bL21 family. Part of the 50S ribosomal subunit. Contacts protein L20.

This protein binds to 23S rRNA in the presence of protein L20. This is Large ribosomal subunit protein bL21 from Mycoplasmopsis agalactiae (strain NCTC 10123 / CIP 59.7 / PG2) (Mycoplasma agalactiae).